The primary structure comprises 417 residues: Gamma-glutamyl phosphate reductase (417 aa).

The protein belongs to the gamma-glutamyl phosphate reductase family.

The protein localises to the cytoplasm. The catalysed reaction is L-glutamate 5-semialdehyde + phosphate + NADP(+) = L-glutamyl 5-phosphate + NADPH + H(+). Its pathway is amino-acid biosynthesis; L-proline biosynthesis; L-glutamate 5-semialdehyde from L-glutamate: step 2/2. Catalyzes the NADPH-dependent reduction of L-glutamate 5-phosphate into L-glutamate 5-semialdehyde and phosphate. The product spontaneously undergoes cyclization to form 1-pyrroline-5-carboxylate. The protein is Gamma-glutamyl phosphate reductase of Shigella boydii serotype 18 (strain CDC 3083-94 / BS512).